A 352-amino-acid polypeptide reads, in one-letter code: Ion-translocating oxidoreductase complex subunit D (352 aa).

The next 4 membrane-spanning stretches (helical) occupy residues 20–40 (IMLL…WFFG), 42–62 (GTLV…ALVL), 89–109 (IPPL…VIIA), and 123–143 (PAMI…TSWL). Thr-187 is modified (FMN phosphoryl threonine). 5 helical membrane-spanning segments follow: residues 214–234 (ILAG…GVWL), 242–262 (WHVP…GWLF), 267–287 (LAAP…FFIL), 301–321 (LIFG…GGYP), and 322–342 (DGVA…DYYT).

This sequence belongs to the NqrB/RnfD family. The complex is composed of six subunits: RsxA, RsxB, RsxC, RsxD, RsxE and RsxG. Requires FMN as cofactor.

Its subcellular location is the cell inner membrane. Part of a membrane-bound complex that couples electron transfer with translocation of ions across the membrane. Required to maintain the reduced state of SoxR. The sequence is that of Ion-translocating oxidoreductase complex subunit D from Escherichia coli (strain UTI89 / UPEC).